Consider the following 253-residue polypeptide: 5'-nucleotidase SurE (253 aa).

Residues Asp-8, Asp-9, Ser-39, and Asn-91 each coordinate a divalent metal cation.

Belongs to the SurE nucleotidase family. Requires a divalent metal cation as cofactor.

The protein localises to the cytoplasm. The catalysed reaction is a ribonucleoside 5'-phosphate + H2O = a ribonucleoside + phosphate. In terms of biological role, nucleotidase that shows phosphatase activity on nucleoside 5'-monophosphates. In Leptothrix cholodnii (strain ATCC 51168 / LMG 8142 / SP-6) (Leptothrix discophora (strain SP-6)), this protein is 5'-nucleotidase SurE.